The sequence spans 465 residues: UDP-N-acetylmuramate--L-alanine ligase (465 aa).

114–120 (GTHGKTT) is an ATP binding site.

Belongs to the MurCDEF family.

It is found in the cytoplasm. It catalyses the reaction UDP-N-acetyl-alpha-D-muramate + L-alanine + ATP = UDP-N-acetyl-alpha-D-muramoyl-L-alanine + ADP + phosphate + H(+). The protein operates within cell wall biogenesis; peptidoglycan biosynthesis. Functionally, cell wall formation. This chain is UDP-N-acetylmuramate--L-alanine ligase, found in Chlorobium phaeobacteroides (strain BS1).